We begin with the raw amino-acid sequence, 620 residues long: LEAF RUST 10 DISEASE-RESISTANCE LOCUS RECEPTOR-LIKE PROTEIN KINASE-like 2.3 (620 aa).

Residues 1–30 form the signal peptide; the sequence is MDSLSSMGFQTASFFLILLFLFYHLPCVPS. Topologically, residues 31–256 are extracellular; that stretch reads QQERSRLCKP…NNGTYSDNRP (226 aa). N-linked (GlcNAc...) asparagine glycans are attached at residues asparagine 75, asparagine 85, asparagine 93, asparagine 132, asparagine 148, asparagine 162, asparagine 189, asparagine 231, and asparagine 248. Residues 257–277 form a helical membrane-spanning segment; it reads FLVTIGTVLGSILCVCVVLFL. Topologically, residues 278–620 are cytoplasmic; the sequence is AFYLNERRIA…SVESSIYSEV (343 aa). Residues 314–596 enclose the Protein kinase domain; that stretch reads KSFTEVVGRG…SLDPPPKPLL (283 aa). Residues 320–328 and lysine 342 each bind ATP; that span reads VGRGGFGTV. Aspartate 431 serves as the catalytic Proton acceptor. The interval 586-620 is disordered; that stretch reads DSLDPPPKPLLHMPMQNNNAESSQLSVESSIYSEV. Polar residues predominate over residues 600–620; the sequence is MQNNNAESSQLSVESSIYSEV.

It belongs to the protein kinase superfamily. Ser/Thr protein kinase family.

The protein resides in the membrane. It carries out the reaction L-seryl-[protein] + ATP = O-phospho-L-seryl-[protein] + ADP + H(+). It catalyses the reaction L-threonyl-[protein] + ATP = O-phospho-L-threonyl-[protein] + ADP + H(+). The protein is LEAF RUST 10 DISEASE-RESISTANCE LOCUS RECEPTOR-LIKE PROTEIN KINASE-like 2.3 of Arabidopsis thaliana (Mouse-ear cress).